The sequence spans 455 residues: Serine--tRNA ligase (455 aa).

An L-serine-binding site is contributed by 252-254 (TAE). Residues 283-285 (RKE) and valine 299 each bind ATP. Residue glutamate 306 participates in L-serine binding. Residue 370–373 (EVVS) coordinates ATP. Residue threonine 406 coordinates L-serine.

Belongs to the class-II aminoacyl-tRNA synthetase family. Type-1 seryl-tRNA synthetase subfamily. Homodimer. The tRNA molecule binds across the dimer.

Its subcellular location is the cytoplasm. It catalyses the reaction tRNA(Ser) + L-serine + ATP = L-seryl-tRNA(Ser) + AMP + diphosphate + H(+). It carries out the reaction tRNA(Sec) + L-serine + ATP = L-seryl-tRNA(Sec) + AMP + diphosphate + H(+). It functions in the pathway aminoacyl-tRNA biosynthesis; selenocysteinyl-tRNA(Sec) biosynthesis; L-seryl-tRNA(Sec) from L-serine and tRNA(Sec): step 1/1. Functionally, catalyzes the attachment of serine to tRNA(Ser). Is also able to aminoacylate tRNA(Sec) with serine, to form the misacylated tRNA L-seryl-tRNA(Sec), which will be further converted into selenocysteinyl-tRNA(Sec). The protein is Serine--tRNA ligase of Thermococcus kodakarensis (strain ATCC BAA-918 / JCM 12380 / KOD1) (Pyrococcus kodakaraensis (strain KOD1)).